A 193-amino-acid polypeptide reads, in one-letter code: Chaperone protein TorD (193 aa).

Belongs to the TorD/DmsD family. TorD subfamily.

The protein resides in the cytoplasm. Its function is as follows. Involved in the biogenesis of TorA. Acts on TorA before the insertion of the molybdenum cofactor and, as a result, probably favors a conformation of the apoenzyme that is competent for acquiring the cofactor. The chain is Chaperone protein TorD from Actinobacillus succinogenes (strain ATCC 55618 / DSM 22257 / CCUG 43843 / 130Z).